The chain runs to 781 residues: Translation initiation factor IF-2 (781 aa).

The disordered stretch occupies residues 44-195 (RQLDNAVDGT…TPPKPKELPE (152 aa)). Residues 53–65 (TNKKAEAPKKETT) show a composition bias toward basic and acidic residues. Over residues 66 to 81 (SNENGNSKGPNKPNMT) the composition is skewed to polar residues. Residues 82–93 (NSNEKSNKPNKP) show a composition bias toward low complexity. The span at 115–126 (KPANTGNQTQAS) shows a compositional bias: polar residues. The segment covering 127–169 (GNQQAGGQKRNNNNNSNRPGGGNPNRPGGNNRPNRGGNFNNKG) has biased composition (low complexity). Positions 282-451 (ERPPVVTIMG…LLVSEVEELK (170 aa)) constitute a tr-type G domain. The interval 291-298 (GHVDHGKT) is G1. Position 291 to 298 (291 to 298 (GHVDHGKT)) interacts with GTP. Residues 316–320 (GITQH) are G2. Residues 337 to 340 (DTPG) are G3. Residues 337-341 (DTPGH) and 391-394 (NKID) contribute to the GTP site. Residues 391–394 (NKID) are G4. Positions 427–429 (SAK) are G5.

Belongs to the TRAFAC class translation factor GTPase superfamily. Classic translation factor GTPase family. IF-2 subfamily.

The protein resides in the cytoplasm. One of the essential components for the initiation of protein synthesis. Protects formylmethionyl-tRNA from spontaneous hydrolysis and promotes its binding to the 30S ribosomal subunits. Also involved in the hydrolysis of GTP during the formation of the 70S ribosomal complex. In Listeria monocytogenes serotype 4a (strain HCC23), this protein is Translation initiation factor IF-2.